The chain runs to 674 residues: Sodium/myo-inositol cotransporter 2 (674 aa).

The Extracellular segment spans residues 1 to 25 (MESSASSPPLTQSDPLEAFPRRTLE). Residues 26-46 (AGDIAVLVLYFLFVLAVGLWS) traverse the membrane as a helical segment. Residues 47–56 (TVKTKRDTVK) lie on the Cytoplasmic side of the membrane. Residues 57 to 77 (GYFLAGGNMLWWPVGASLFAS) form a helical membrane-spanning segment. Residues 78-102 (NVGSGHFVGLAGSGAAAGLSVTAYE) lie on the Extracellular side of the membrane. A helical membrane pass occupies residues 103–123 (LNGLFFVLMLSWIFLPIYITG). Topologically, residues 124 to 140 (QVTTMPEYLRKRFGGNR) are cytoplasmic. Residues 141 to 161 (IPIILAVLYLFIYIFTKISVD) form a helical membrane-spanning segment. Residues 162-180 (MYAGAIFIQQSLHVNLYLA) lie on the Extracellular side of the membrane. A helical transmembrane segment spans residues 181–201 (IVGLLAVTALYTIAGGLAAVI). The Cytoplasmic portion of the chain corresponds to 202–208 (YTDALQT). A helical membrane pass occupies residues 209-229 (LIMLIGALILMGYSFAAVGGL). The Extracellular segment spans residues 230-272 (EGLEEKYFLAMASNRSGNSSCGLPREDAFHIFRDPVTSDLPWP). A helical transmembrane segment spans residues 273-293 (GILFGMSIPSLWYWCTDQVIV). Over 294-308 (QRTLAAKNLSHAKGG) the chain is Cytoplasmic. The chain crosses the membrane as a helical span at residues 309–329 (SLMAAYLKVLPLFIMVFPGMV). Residues 330–374 (SRVLFPDEVACADPEICRKVCSNPAGCSDIAYPKLVLELLPTGLR) lie on the Extracellular side of the membrane. The chain crosses the membrane as a helical span at residues 375–397 (GLMMAVMVAALTSSLTSIFNSAS). The Cytoplasmic portion of the chain corresponds to 398-418 (TIFTMDLWNHLRPRASEKELM). A helical membrane pass occupies residues 419–439 (IVGRVFVLLLVLVSILWIPVV). The Extracellular segment spans residues 440-446 (QASQGGQ). The chain crosses the membrane as a helical span at residues 447–467 (LFIYIQSISSYLQPPVAVVFI). Residues 468–479 (MGCFWKRANEKG) are Cytoplasmic-facing. Residues 480–500 (AFFGLVLGLLLGLVRLILDFI) traverse the membrane as a helical segment. At 501 to 521 (YVQPRCDQLDERPAVVKDVHY) the chain is on the extracellular side. A helical transmembrane segment spans residues 522–542 (LYFSMILSSVTLITVCAVSWF). At 543–653 (TEPPSKEMVS…SLEENPLVKT (111 aa)) the chain is on the cytoplasmic side. The interval 567–589 (EQVPSATPPPLTLSQNGTPEASG) is disordered. A compositionally biased stretch (polar residues) spans 578–589 (TLSQNGTPEASG). A helical membrane pass occupies residues 654–674 (LLDLNLIICISCAIFLWGYFA).

It belongs to the sodium:solute symporter (SSF) (TC 2.A.21) family.

It localises to the membrane. The protein localises to the apical cell membrane. The enzyme catalyses myo-inositol(out) + 2 Na(+)(out) = myo-inositol(in) + 2 Na(+)(in). It carries out the reaction 1D-chiro-inositol(out) + 2 Na(+)(out) = 1D-chiro-inositol(in) + 2 Na(+)(in). The catalysed reaction is D-glucose(out) + 2 Na(+)(out) = D-glucose(in) + 2 Na(+)(in). It catalyses the reaction D-xylose(out) + 2 Na(+)(out) = D-xylose(in) + 2 Na(+)(in). With respect to regulation, MI transport activity inhibited by D-chiro-inositol (DCI), phlorizin (Pz) and sodium (Na(+)). Insulin increases D-chiro-inositol uptake. Involved in the sodium-dependent cotransport of myo-inositol (MI) with a Na(+):MI stoichiometry of 2:1. Exclusively responsible for apical MI transport and absorption in intestine. Can also transport D-chiro-inositol (DCI) but not L-fucose. Exhibits stereospecific cotransport of both D-glucose and D-xylose. May induce apoptosis through the TNF-alpha, PDCD1 pathway. May play a role in the regulation of MI concentration in serum, involving reabsorption in at least the proximal tubule of the kidney. The sequence is that of Sodium/myo-inositol cotransporter 2 from Bos taurus (Bovine).